Consider the following 127-residue polypeptide: Small ribosomal subunit protein uS13 (127 aa).

The segment covering 95 to 118 (GLPVRGQRTHTNARTRKGPKKGLV) has biased composition (basic residues). A disordered region spans residues 95-127 (GLPVRGQRTHTNARTRKGPKKGLVRKAAAPAPK).

The protein belongs to the universal ribosomal protein uS13 family. As to quaternary structure, part of the 30S ribosomal subunit. Forms a loose heterodimer with protein S19. Forms two bridges to the 50S subunit in the 70S ribosome.

Its function is as follows. Located at the top of the head of the 30S subunit, it contacts several helices of the 16S rRNA. In the 70S ribosome it contacts the 23S rRNA (bridge B1a) and protein L5 of the 50S subunit (bridge B1b), connecting the 2 subunits; these bridges are implicated in subunit movement. Contacts the tRNAs in the A and P-sites. This Anaeromyxobacter sp. (strain Fw109-5) protein is Small ribosomal subunit protein uS13.